The chain runs to 113 residues: Endoribonuclease SymE (113 aa).

In terms of domain architecture, SpoVT-AbrB spans 29 to 74 (SRYPDYSRIPAITLKGQWLEAAGFATGTAVVVKVMEGCIVLTAQPA).

Belongs to the SymE family.

The protein resides in the cytoplasm. Functionally, involved in the degradation and recycling of damaged RNA. It is itself a target for degradation by the ATP-dependent protease Lon. The sequence is that of Endoribonuclease SymE from Escherichia coli (strain ATCC 8739 / DSM 1576 / NBRC 3972 / NCIMB 8545 / WDCM 00012 / Crooks).